The chain runs to 303 residues: tRNA dimethylallyltransferase 1 (303 aa).

17–24 (GPTACGKT) lines the ATP pocket. Substrate is bound at residue 19–24 (TACGKT). The segment at 42–45 (DSRQ) is interaction with substrate tRNA.

It belongs to the IPP transferase family. As to quaternary structure, monomer. Requires Mg(2+) as cofactor.

The enzyme catalyses adenosine(37) in tRNA + dimethylallyl diphosphate = N(6)-dimethylallyladenosine(37) in tRNA + diphosphate. Its function is as follows. Catalyzes the transfer of a dimethylallyl group onto the adenine at position 37 in tRNAs that read codons beginning with uridine, leading to the formation of N6-(dimethylallyl)adenosine (i(6)A). This Hahella chejuensis (strain KCTC 2396) protein is tRNA dimethylallyltransferase 1.